The chain runs to 227 residues: Cytochrome c oxidase subunit 2 (227 aa).

The Mitochondrial intermembrane segment spans residues 1 to 14; that stretch reads MAYPFQLGLQDATS. A helical membrane pass occupies residues 15-45; sequence PIMEELTNFHDHTLMIVFLISSLVLYIISLM. Topologically, residues 46 to 59 are mitochondrial matrix; sequence LTTKLTHTNTMDAQ. Residues 60-87 form a helical membrane-spanning segment; the sequence is EVETIWTILPAVILILIALPSLRILYMM. Residues 88–227 lie on the Mitochondrial intermembrane side of the membrane; sequence DEINNPALTV…HFENWSASMI (140 aa). Cu cation contacts are provided by His-161, Cys-196, Glu-198, Cys-200, His-204, and Met-207. Residue Glu-198 coordinates Mg(2+).

This sequence belongs to the cytochrome c oxidase subunit 2 family. In terms of assembly, component of the cytochrome c oxidase (complex IV, CIV), a multisubunit enzyme composed of 14 subunits. The complex is composed of a catalytic core of 3 subunits MT-CO1, MT-CO2 and MT-CO3, encoded in the mitochondrial DNA, and 11 supernumerary subunits COX4I, COX5A, COX5B, COX6A, COX6B, COX6C, COX7A, COX7B, COX7C, COX8 and NDUFA4, which are encoded in the nuclear genome. The complex exists as a monomer or a dimer and forms supercomplexes (SCs) in the inner mitochondrial membrane with NADH-ubiquinone oxidoreductase (complex I, CI) and ubiquinol-cytochrome c oxidoreductase (cytochrome b-c1 complex, complex III, CIII), resulting in different assemblies (supercomplex SCI(1)III(2)IV(1) and megacomplex MCI(2)III(2)IV(2)). Found in a complex with TMEM177, COA6, COX18, COX20, SCO1 and SCO2. Interacts with TMEM177 in a COX20-dependent manner. Interacts with COX20. Interacts with COX16. It depends on Cu cation as a cofactor.

Its subcellular location is the mitochondrion inner membrane. It carries out the reaction 4 Fe(II)-[cytochrome c] + O2 + 8 H(+)(in) = 4 Fe(III)-[cytochrome c] + 2 H2O + 4 H(+)(out). Its function is as follows. Component of the cytochrome c oxidase, the last enzyme in the mitochondrial electron transport chain which drives oxidative phosphorylation. The respiratory chain contains 3 multisubunit complexes succinate dehydrogenase (complex II, CII), ubiquinol-cytochrome c oxidoreductase (cytochrome b-c1 complex, complex III, CIII) and cytochrome c oxidase (complex IV, CIV), that cooperate to transfer electrons derived from NADH and succinate to molecular oxygen, creating an electrochemical gradient over the inner membrane that drives transmembrane transport and the ATP synthase. Cytochrome c oxidase is the component of the respiratory chain that catalyzes the reduction of oxygen to water. Electrons originating from reduced cytochrome c in the intermembrane space (IMS) are transferred via the dinuclear copper A center (CU(A)) of subunit 2 and heme A of subunit 1 to the active site in subunit 1, a binuclear center (BNC) formed by heme A3 and copper B (CU(B)). The BNC reduces molecular oxygen to 2 water molecules using 4 electrons from cytochrome c in the IMS and 4 protons from the mitochondrial matrix. In Sundamys muelleri (Mueller's giant sunda rat), this protein is Cytochrome c oxidase subunit 2 (MT-CO2).